The primary structure comprises 275 residues: 3-methyl-2-oxobutanoate hydroxymethyltransferase (275 aa).

The Mg(2+) site is built by Asp-44 and Asp-83. Residues Asp-44 to Ser-45, Asp-83, and Lys-113 each bind 3-methyl-2-oxobutanoate. Glu-115 serves as a coordination point for Mg(2+). Glu-182 functions as the Proton acceptor in the catalytic mechanism.

The protein belongs to the PanB family. As to quaternary structure, homodecamer; pentamer of dimers. Mg(2+) serves as cofactor.

It is found in the cytoplasm. The catalysed reaction is 3-methyl-2-oxobutanoate + (6R)-5,10-methylene-5,6,7,8-tetrahydrofolate + H2O = 2-dehydropantoate + (6S)-5,6,7,8-tetrahydrofolate. Its pathway is cofactor biosynthesis; (R)-pantothenate biosynthesis; (R)-pantoate from 3-methyl-2-oxobutanoate: step 1/2. In terms of biological role, catalyzes the reversible reaction in which hydroxymethyl group from 5,10-methylenetetrahydrofolate is transferred onto alpha-ketoisovalerate to form ketopantoate. The chain is 3-methyl-2-oxobutanoate hydroxymethyltransferase from Enterococcus faecalis (strain ATCC 700802 / V583).